The following is a 354-amino-acid chain: Non-structural protein NS2 (354 aa).

2 disordered regions span residues 163-196 (NERESAPRLQVQSVASREESRWMDDDEAKVDNEA) and 229-269 (DERD…THIT). 2 stretches are compositionally biased toward basic and acidic residues: residues 178-196 (SREESRWMDDDEAKVDNEA) and 237-249 (DERGDEEQVKTLS). A compositionally biased stretch (acidic residues) spans 250 to 260 (DDDDQGEDASD).

Functionally, single-stranded RNA-binding protein. In Bluetongue virus 17 (isolate USA) (BTV 17), this protein is Non-structural protein NS2 (Segment-8).